The chain runs to 412 residues: UPF0761 membrane protein lpg0643 (412 aa).

The next 6 membrane-spanning stretches (helical) occupy residues 36–56 (ALAF…LAIF), 99–119 (LSIW…FTIE), 137–157 (AFLL…LSLA), 177–197 (ILHY…YVVV), 210–230 (GGLV…YYLI), and 241–261 (AFAT…ITLL).

Belongs to the UPF0761 family.

It localises to the cell inner membrane. This is UPF0761 membrane protein lpg0643 from Legionella pneumophila subsp. pneumophila (strain Philadelphia 1 / ATCC 33152 / DSM 7513).